A 237-amino-acid polypeptide reads, in one-letter code: Large ribosomal subunit protein uL1 (237 aa).

The protein belongs to the universal ribosomal protein uL1 family. Part of the 50S ribosomal subunit.

Its function is as follows. Binds directly to 23S rRNA. The L1 stalk is quite mobile in the ribosome, and is involved in E site tRNA release. Functionally, protein L1 is also a translational repressor protein, it controls the translation of the L11 operon by binding to its mRNA. The protein is Large ribosomal subunit protein uL1 of Synechococcus elongatus (strain ATCC 33912 / PCC 7942 / FACHB-805) (Anacystis nidulans R2).